Reading from the N-terminus, the 390-residue chain is Leu/Ile/Val-binding protein homolog 6 (390 aa).

The signal sequence occupies residues 1–21; sequence MKKIALTALAVFSLAASAAYA.

This sequence belongs to the leucine-binding protein family.

Component of an amino-acid transport system. This chain is Leu/Ile/Val-binding protein homolog 6, found in Brucella abortus (strain 2308).